A 698-amino-acid polypeptide reads, in one-letter code: Elongation factor G (698 aa).

The region spanning 8 to 284 (ANVRNIGIMA…AVVDFLPSPL (277 aa)) is the tr-type G domain. Residues 17 to 24 (AHIDAGKT), 81 to 85 (DTPGH), and 135 to 138 (NKLD) each bind GTP. Residues 289–309 (IEGTGTDGETPLQRKPSTSEP) form a disordered region.

Belongs to the TRAFAC class translation factor GTPase superfamily. Classic translation factor GTPase family. EF-G/EF-2 subfamily.

Its subcellular location is the cytoplasm. Catalyzes the GTP-dependent ribosomal translocation step during translation elongation. During this step, the ribosome changes from the pre-translocational (PRE) to the post-translocational (POST) state as the newly formed A-site-bound peptidyl-tRNA and P-site-bound deacylated tRNA move to the P and E sites, respectively. Catalyzes the coordinated movement of the two tRNA molecules, the mRNA and conformational changes in the ribosome. This Salinispora arenicola (strain CNS-205) protein is Elongation factor G.